Consider the following 1289-residue polypeptide: uncharacterized protein (1289 aa).

The signal sequence occupies residues 1–23 (MRKYTVIASILLSFLSVLSGGHH). The 137-residue stretch at 141–277 (EGYQADLAHI…VVISTNTGKD (137 aa)) folds into the LTD domain.

This is an uncharacterized protein from Bacillus subtilis (strain 168).